A 577-amino-acid polypeptide reads, in one-letter code: Arginine--tRNA ligase (577 aa).

The 'HIGH' region signature appears at P122–H132.

The protein belongs to the class-I aminoacyl-tRNA synthetase family. In terms of assembly, monomer.

It localises to the cytoplasm. The catalysed reaction is tRNA(Arg) + L-arginine + ATP = L-arginyl-tRNA(Arg) + AMP + diphosphate. The sequence is that of Arginine--tRNA ligase from Escherichia coli (strain K12 / MC4100 / BW2952).